The chain runs to 609 residues: QWRF motif-containing protein 4 (609 aa).

Disordered regions lie at residues 1-227 (MQVG…IRGN) and 271-369 (EVSS…TAQS). 2 stretches are compositionally biased toward polar residues: residues 11–21 (GKQQQSVSDAT) and 46–57 (EVSSRYRSPTPT). Composition is skewed to low complexity over residues 98 to 110 (PVSDVLVDLPVSS) and 129 to 143 (SLSVSFQSDSVSVPV). Over residues 151-180 (VTSSTDRTLRPSSSNIAHKQQSETTSVTRK) the composition is skewed to polar residues. Composition is skewed to low complexity over residues 271–285 (EVSSSTTSEDSSSTE) and 302–332 (SAPGSRTASPSRSSFSSSSSSNSRGMSPSRG). The short motif at 407–410 (QWRF) is the QWRF motif element. A disordered region spans residues 588-609 (EEEVRDDAESSPLLPLSKFQWP).

This sequence belongs to the QWRF family.

The polypeptide is QWRF motif-containing protein 4 (QWRF4) (Arabidopsis thaliana (Mouse-ear cress)).